We begin with the raw amino-acid sequence, 322 residues long: Replication factor C small subunit (322 aa).

Residue 46–53 (GSAGIGKT) coordinates ATP.

This sequence belongs to the activator 1 small subunits family. RfcS subfamily. Heteromultimer composed of small subunits (RfcS) and large subunits (RfcL).

Its function is as follows. Part of the RFC clamp loader complex which loads the PCNA sliding clamp onto DNA. In Methanoculleus marisnigri (strain ATCC 35101 / DSM 1498 / JR1), this protein is Replication factor C small subunit.